A 326-amino-acid chain; its full sequence is Probable GTP 3',8-cyclase (326 aa).

The 230-residue stretch at 6–235 folds into the Radical SAM core domain; that stretch reads LYGRPVLSLR…NRPRYIIRTQ (230 aa). Arginine 15 contacts GTP. [4Fe-4S] cluster contacts are provided by cysteine 22, cysteine 26, and cysteine 29. GTP is bound at residue lysine 62. Glycine 66 contacts S-adenosyl-L-methionine. Threonine 92 contributes to the GTP binding site. An S-adenosyl-L-methionine-binding site is contributed by serine 116. Lysine 153 lines the GTP pocket. Cysteine 253 and cysteine 256 together coordinate [4Fe-4S] cluster. A GTP-binding site is contributed by 258-260; it reads RLR. [4Fe-4S] cluster is bound at residue cysteine 270.

It belongs to the radical SAM superfamily. MoaA family. Requires [4Fe-4S] cluster as cofactor.

The catalysed reaction is GTP + AH2 + S-adenosyl-L-methionine = (8S)-3',8-cyclo-7,8-dihydroguanosine 5'-triphosphate + 5'-deoxyadenosine + L-methionine + A + H(+). It participates in cofactor biosynthesis; molybdopterin biosynthesis. Its function is as follows. Catalyzes the cyclization of GTP to (8S)-3',8-cyclo-7,8-dihydroguanosine 5'-triphosphate. The polypeptide is Probable GTP 3',8-cyclase (Thermoplasma volcanium (strain ATCC 51530 / DSM 4299 / JCM 9571 / NBRC 15438 / GSS1)).